The primary structure comprises 161 residues: Epithelial membrane protein 2 (161 aa).

4 helical membrane-spanning segments follow: residues 1-21, 67-87, 95-115, and 137-157; these read MLVILAFIILFHITSAILLFI, TMILATILCCVGFFVFILQLF, FVFTAIIQLLSAFCVMTGASI, and FVVAWVAFPMTLLSGLMYLVL.

This sequence belongs to the PMP-22/EMP/MP20 family. As to expression, expressed in the arches, orbits, pectoral fins, vessels, pronephric renal tubules, and glomeruli.

The protein resides in the golgi apparatus membrane. Its subcellular location is the cell membrane. It is found in the apical cell membrane. It localises to the membrane raft. The protein localises to the cytoplasm. The protein resides in the nucleus. Its subcellular location is the perinuclear region. Functions as a key regulator of cell membrane composition by regulating protein surface expression. Also, plays a role in regulation of processes including cell migration, cell proliferation, cell contraction and cell adhesion. May play a role in glomerular filtration. The protein is Epithelial membrane protein 2 (emp2) of Danio rerio (Zebrafish).